A 394-amino-acid polypeptide reads, in one-letter code: Elongation factor Tu 1 (394 aa).

In terms of domain architecture, tr-type G spans 9-204 (KPHCNIGTIG…AIDDYIPQPT (196 aa)). Positions 18–25 (GHVDHGKT) are G1. 18–25 (GHVDHGKT) serves as a coordination point for GTP. Threonine 25 provides a ligand contact to Mg(2+). The tract at residues 61 to 65 (GITIQ) is G2. The segment at 82-85 (DCPG) is G3. Residues 82 to 86 (DCPGH) and 137 to 140 (NKID) contribute to the GTP site. Residues 137-140 (NKID) are G4. The segment at 174–176 (SAL) is G5.

The protein belongs to the TRAFAC class translation factor GTPase superfamily. Classic translation factor GTPase family. EF-Tu/EF-1A subfamily. As to quaternary structure, monomer.

Its subcellular location is the cytoplasm. The catalysed reaction is GTP + H2O = GDP + phosphate + H(+). Its function is as follows. GTP hydrolase that promotes the GTP-dependent binding of aminoacyl-tRNA to the A-site of ribosomes during protein biosynthesis. The chain is Elongation factor Tu 1 from Orientia tsutsugamushi (strain Boryong) (Rickettsia tsutsugamushi).